Here is an 80-residue protein sequence, read N- to C-terminus: Putative antitoxin VapB44 (80 aa).

The segment at 40–68 is disordered; it reads NQNPQPAASQEDAFHGFEPLPHRGGAVSN.

Possibly the antitoxin component of a type II toxin-antitoxin (TA) system. Its cognate toxin is VapC44 (Potential). The sequence is that of Putative antitoxin VapB44 (vapB44) from Mycobacterium tuberculosis (strain CDC 1551 / Oshkosh).